A 190-amino-acid chain; its full sequence is Vascular endothelial growth factor A (190 aa).

A signal peptide spans 1-26 (MNFLLSWVHWTLALLLYLHHAKWSQA). Cystine bridges form between Cys-51-Cys-93, Cys-82-Cys-127, and Cys-86-Cys-129. Residue Asn-100 is glycosylated (N-linked (GlcNAc...) asparagine).

It belongs to the PDGF/VEGF growth factor family. As to quaternary structure, homodimer; disulfide-linked. Also found as heterodimer with PGF. Interacts with NRP1. Interacts with isoform 2 of BSG. Interacts with CD82; this interaction inhibits VEGFA-mediated signaling pathway.

The protein resides in the secreted. Growth factor active in angiogenesis, vasculogenesis and endothelial cell growth. Induces endothelial cell proliferation, promotes cell migration, inhibits apoptosis and induces permeabilization of blood vessels. Binds to the FLT1/VEGFR1 and KDR/VEGFR2 receptors, heparan sulfate and heparin. Binding to NRP1 receptor initiates a signaling pathway needed for motor neuron axon guidance and cell body migration, including for the caudal migration of facial motor neurons from rhombomere 4 to rhombomere 6 during embryonic development. Also binds the DEAR/FBXW7-AS1 receptor. This is Vascular endothelial growth factor A (VEGFA) from Mesocricetus auratus (Golden hamster).